The primary structure comprises 305 residues: GMP synthase [glutamine-hydrolyzing] subunit B (305 aa).

The GMPS ATP-PPase domain maps to 2 to 184 (VKTEKFIQKS…LGLPPEIQHR (183 aa)). 29 to 35 (SGGVDSS) contacts ATP.

In terms of assembly, heterodimer composed of a glutamine amidotransferase subunit (A) and a GMP-binding subunit (B).

The catalysed reaction is XMP + L-glutamine + ATP + H2O = GMP + L-glutamate + AMP + diphosphate + 2 H(+). The protein operates within purine metabolism; GMP biosynthesis; GMP from XMP (L-Gln route): step 1/1. Catalyzes the synthesis of GMP from XMP. The sequence is that of GMP synthase [glutamine-hydrolyzing] subunit B from Methanoregula boonei (strain DSM 21154 / JCM 14090 / 6A8).